The primary structure comprises 119 residues: Large ribosomal subunit protein bL20 (119 aa).

The protein belongs to the bacterial ribosomal protein bL20 family.

Its function is as follows. Binds directly to 23S ribosomal RNA and is necessary for the in vitro assembly process of the 50S ribosomal subunit. It is not involved in the protein synthesizing functions of that subunit. This chain is Large ribosomal subunit protein bL20, found in Cellvibrio japonicus (strain Ueda107) (Pseudomonas fluorescens subsp. cellulosa).